A 126-amino-acid chain; its full sequence is Small ribosomal subunit protein uS13c (126 aa).

The disordered stretch occupies residues 97–126; the sequence is PLRGQRTRTNARTRRGGKKTVAGKKKAPRK. The segment covering 101 to 126 has biased composition (basic residues); that stretch reads QRTRTNARTRRGGKKTVAGKKKAPRK.

This sequence belongs to the universal ribosomal protein uS13 family. In terms of assembly, part of the 30S ribosomal subunit.

Its subcellular location is the plastid. The protein localises to the chloroplast. Its function is as follows. Located at the top of the head of the 30S subunit, it contacts several helices of the 16S rRNA. The protein is Small ribosomal subunit protein uS13c of Porphyra purpurea (Red seaweed).